A 352-amino-acid chain; its full sequence is Protein-glutamate methylesterase/protein-glutamine glutaminase (352 aa).

One can recognise a Response regulatory domain in the interval 5-123 (RILIVDDSVI…SKEKAIEYIR (119 aa)). A 4-aspartylphosphate modification is found at Asp56. One can recognise a CheB-type methylesterase domain in the interval 166 to 352 (EIVAIGVSTG…LAEEIIRRIG (187 aa)). Catalysis depends on residues Ser173, His200, and Asp296.

This sequence belongs to the CheB family. Phosphorylated by CheA. Phosphorylation of the N-terminal regulatory domain activates the methylesterase activity.

It is found in the cytoplasm. It catalyses the reaction [protein]-L-glutamate 5-O-methyl ester + H2O = L-glutamyl-[protein] + methanol + H(+). The enzyme catalyses L-glutaminyl-[protein] + H2O = L-glutamyl-[protein] + NH4(+). Involved in chemotaxis. Part of a chemotaxis signal transduction system that modulates chemotaxis in response to various stimuli. Catalyzes the demethylation of specific methylglutamate residues introduced into the chemoreceptors (methyl-accepting chemotaxis proteins or MCP) by CheR. Also mediates the irreversible deamidation of specific glutamine residues to glutamic acid. This chain is Protein-glutamate methylesterase/protein-glutamine glutaminase, found in Trichodesmium erythraeum (strain IMS101).